The chain runs to 76 residues: MKLTCLMIVAVLFLTAWTFVTAVPDSSNALENLYLKAHHEMNNPEDSELNKRCYDGGTSCNTGNQCCSGWCIFLCL.

An N-terminal signal peptide occupies residues 1–22; it reads MKLTCLMIVAVLFLTAWTFVTA. A propeptide spanning residues 23-50 is cleaved from the precursor; the sequence is VPDSSNALENLYLKAHHEMNNPEDSELN. Cystine bridges form between cysteine 53-cysteine 67, cysteine 60-cysteine 71, and cysteine 66-cysteine 75.

This sequence belongs to the conotoxin O1 superfamily. As to expression, expressed by the venom duct.

The protein localises to the secreted. In terms of biological role, omega-conotoxins act at presynaptic membranes, they bind and block voltage-gated calcium channels (Cav). The protein is Omega-conotoxin-like Ai6.3 of Conus ammiralis (Admiral cone).